A 592-amino-acid polypeptide reads, in one-letter code: Putative uric acid sigma-54-dependent transcriptional regulator UacR (592 aa).

Positions 158–229 (ISKIFATMID…HMQHIVSWDD (72 aa)) constitute a PAS domain. The Sigma-54 factor interaction domain maps to 272–502 (LVGECRVMRQ…LSNLMEYLVN (231 aa)). Residues 300-307 (GESGTGKE) and 364-373 (ANTGTLFLDE) each bind ATP. A DNA-binding region (H-T-H motif) is located at residues 567 to 585 (KQVADELGIGIATLYRKIK).

Essential for both formate-dependent and formate-independent uric acid degradation. May be directly involved in the transcription of uacF in response to hypoxanthine, xanthine, and uric acid. This chain is Putative uric acid sigma-54-dependent transcriptional regulator UacR, found in Escherichia coli (strain K12).